A 419-amino-acid polypeptide reads, in one-letter code: Dual specificity protein phosphatase 7 (419 aa).

A disordered region spans residues 1 to 41 (MKNQLRGPPVRAHMSTSGAAAAGGTRAGSEPGAGSGSSAGI). The span at 15-30 (STSGAAAAGGTRAGSE) shows a compositional bias: low complexity. Positions 31-41 (PGAGSGSSAGI) are enriched in gly residues. Residues 68–187 (GGASLLLLDC…FQTEYSEHCE (120 aa)) form the Rhodanese domain. Positions 216–240 (CSDGESDRELPSSATESDGSPVPSS) are disordered. The span at 227–240 (SSATESDGSPVPSS) shows a compositional bias: polar residues. The Tyrosine-protein phosphatase domain maps to 244–387 (FPVQILPYLY…LLDFERTLGL (144 aa)). Residue Cys-331 is the Phosphocysteine intermediate of the active site. 331 to 337 (CLAGISR) is a substrate binding site.

This sequence belongs to the protein-tyrosine phosphatase family. Non-receptor class dual specificity subfamily. Interacts with MAPK1/ERK2; the interaction enhances DUSP7 phosphatase activity.

Its subcellular location is the cytoplasm. The catalysed reaction is O-phospho-L-tyrosyl-[protein] + H2O = L-tyrosyl-[protein] + phosphate. The enzyme catalyses O-phospho-L-seryl-[protein] + H2O = L-seryl-[protein] + phosphate. It catalyses the reaction O-phospho-L-threonyl-[protein] + H2O = L-threonyl-[protein] + phosphate. With respect to regulation, strongly inhibited by sodium orthovanadate. Its function is as follows. Dual specificity protein phosphatase. Shows high activity towards MAPK1/ERK2. Also has lower activity towards MAPK14 and MAPK8. In arrested oocytes, plays a role in meiotic resumption. Promotes nuclear envelope breakdown and activation of the CDK1/Cyclin-B complex in oocytes, probably by dephosphorylating and inactivating the conventional protein kinase C (cPKC) isozyme PRKCB. May also inactivate PRKCA and/or PRKCG. Also important in oocytes for normal chromosome alignment on the metaphase plate and progression to anaphase, where it might regulate activity of the spindle-assembly checkpoint (SAC) complex. The protein is Dual specificity protein phosphatase 7 of Rattus norvegicus (Rat).